The sequence spans 86 residues: Large ribosomal subunit protein bL27 (86 aa).

The segment at 1 to 20 (MAHKKAGGSSRNGRDSESKR) is disordered.

Belongs to the bacterial ribosomal protein bL27 family.

The polypeptide is Large ribosomal subunit protein bL27 (Paraburkholderia phymatum (strain DSM 17167 / CIP 108236 / LMG 21445 / STM815) (Burkholderia phymatum)).